Reading from the N-terminus, the 129-residue chain is Small ribosomal subunit protein uS11 (129 aa).

The protein belongs to the universal ribosomal protein uS11 family. Part of the 30S ribosomal subunit. Interacts with proteins S7 and S18. Binds to IF-3.

Functionally, located on the platform of the 30S subunit, it bridges several disparate RNA helices of the 16S rRNA. Forms part of the Shine-Dalgarno cleft in the 70S ribosome. This Salmonella newport (strain SL254) protein is Small ribosomal subunit protein uS11.